The sequence spans 259 residues: UPF0739 protein C1orf74 homolog (259 aa).

Belongs to the UPF0739 family.

In Danio rerio (Zebrafish), this protein is UPF0739 protein C1orf74 homolog.